The primary structure comprises 542 residues: Phosphoenolpyruvate carboxykinase (ATP) (542 aa).

Positions 67, 208, and 214 each coordinate substrate. ATP-binding positions include lysine 214, histidine 233, and 249–257 (GLSGTGKTT). Residues lysine 214 and histidine 233 each contribute to the Mn(2+) site. Mn(2+) is bound at residue aspartate 270. ATP-binding positions include glutamate 298, arginine 334, 450–451 (RI), and threonine 456. Arginine 334 lines the substrate pocket.

Belongs to the phosphoenolpyruvate carboxykinase (ATP) family. Monomer. It depends on Mn(2+) as a cofactor.

It is found in the cytoplasm. It carries out the reaction oxaloacetate + ATP = phosphoenolpyruvate + ADP + CO2. It functions in the pathway carbohydrate biosynthesis; gluconeogenesis. Functionally, involved in the gluconeogenesis. Catalyzes the conversion of oxaloacetate (OAA) to phosphoenolpyruvate (PEP) through direct phosphoryl transfer between the nucleoside triphosphate and OAA. The chain is Phosphoenolpyruvate carboxykinase (ATP) from Vibrio vulnificus (strain YJ016).